The primary structure comprises 341 residues: Beta-hexosaminidase (341 aa).

Substrate contacts are provided by residues Asp61, Arg69, Arg134, and 164–165 (KH). The active-site Proton donor/acceptor is the His177. Asp249 (nucleophile) is an active-site residue.

The protein belongs to the glycosyl hydrolase 3 family. NagZ subfamily.

It is found in the cytoplasm. The enzyme catalyses Hydrolysis of terminal non-reducing N-acetyl-D-hexosamine residues in N-acetyl-beta-D-hexosaminides.. The protein operates within cell wall biogenesis; peptidoglycan recycling. In terms of biological role, plays a role in peptidoglycan recycling by cleaving the terminal beta-1,4-linked N-acetylglucosamine (GlcNAc) from peptide-linked peptidoglycan fragments, giving rise to free GlcNAc, anhydro-N-acetylmuramic acid and anhydro-N-acetylmuramic acid-linked peptides. This chain is Beta-hexosaminidase, found in Shewanella frigidimarina (strain NCIMB 400).